The primary structure comprises 406 residues: 4-hydroxy-3-methylbut-2-enyl diphosphate reductase (406 aa).

Cysteine 66 contributes to the [4Fe-4S] cluster binding site. Residue histidine 96 coordinates (2E)-4-hydroxy-3-methylbut-2-enyl diphosphate. Position 96 (histidine 96) interacts with dimethylallyl diphosphate. Histidine 96 is an isopentenyl diphosphate binding site. A [4Fe-4S] cluster-binding site is contributed by cysteine 157. Histidine 185 contributes to the (2E)-4-hydroxy-3-methylbut-2-enyl diphosphate binding site. Dimethylallyl diphosphate is bound at residue histidine 185. Histidine 185 serves as a coordination point for isopentenyl diphosphate. Glutamate 187 (proton donor) is an active-site residue. Threonine 250 lines the (2E)-4-hydroxy-3-methylbut-2-enyl diphosphate pocket. Cysteine 288 serves as a coordination point for [4Fe-4S] cluster. 4 residues coordinate (2E)-4-hydroxy-3-methylbut-2-enyl diphosphate: serine 317, serine 318, asparagine 319, and serine 379. The dimethylallyl diphosphate site is built by serine 317, serine 318, asparagine 319, and serine 379. Isopentenyl diphosphate is bound by residues serine 317, serine 318, asparagine 319, and serine 379.

It belongs to the IspH family. [4Fe-4S] cluster is required as a cofactor.

The catalysed reaction is isopentenyl diphosphate + 2 oxidized [2Fe-2S]-[ferredoxin] + H2O = (2E)-4-hydroxy-3-methylbut-2-enyl diphosphate + 2 reduced [2Fe-2S]-[ferredoxin] + 2 H(+). It catalyses the reaction dimethylallyl diphosphate + 2 oxidized [2Fe-2S]-[ferredoxin] + H2O = (2E)-4-hydroxy-3-methylbut-2-enyl diphosphate + 2 reduced [2Fe-2S]-[ferredoxin] + 2 H(+). Its pathway is isoprenoid biosynthesis; dimethylallyl diphosphate biosynthesis; dimethylallyl diphosphate from (2E)-4-hydroxy-3-methylbutenyl diphosphate: step 1/1. It participates in isoprenoid biosynthesis; isopentenyl diphosphate biosynthesis via DXP pathway; isopentenyl diphosphate from 1-deoxy-D-xylulose 5-phosphate: step 6/6. Catalyzes the conversion of 1-hydroxy-2-methyl-2-(E)-butenyl 4-diphosphate (HMBPP) into a mixture of isopentenyl diphosphate (IPP) and dimethylallyl diphosphate (DMAPP). Acts in the terminal step of the DOXP/MEP pathway for isoprenoid precursor biosynthesis. In Synechococcus sp. (strain RCC307), this protein is 4-hydroxy-3-methylbut-2-enyl diphosphate reductase.